Here is a 538-residue protein sequence, read N- to C-terminus: NADH-quinone oxidoreductase subunit N (538 aa).

A run of 14 helical transmembrane segments spans residues 28–48 (LAPV…EAFV), 57–77 (QIIV…TTIA), 94–114 (PTLA…VLFA), 147–167 (HTEV…FAAA), 170–190 (LIMM…LCGM), 206–226 (FLLG…LYGC), 249–269 (IVAG…AVPF), 288–308 (MAVA…YVGL), 315–335 (WQIV…IVGL), 343–363 (LLAY…VGAW), 380–400 (VLVY…LILM), 424–444 (IGVL…TAGF), 458–478 (GYAW…AFYL), and 503–523 (IAGW…GVAP).

Belongs to the complex I subunit 2 family. NDH-1 is composed of 14 different subunits. Subunits NuoA, H, J, K, L, M, N constitute the membrane sector of the complex.

The protein resides in the cell membrane. It catalyses the reaction a quinone + NADH + 5 H(+)(in) = a quinol + NAD(+) + 4 H(+)(out). NDH-1 shuttles electrons from NADH, via FMN and iron-sulfur (Fe-S) centers, to quinones in the respiratory chain. The immediate electron acceptor for the enzyme in this species is believed to be a menaquinone. Couples the redox reaction to proton translocation (for every two electrons transferred, four hydrogen ions are translocated across the cytoplasmic membrane), and thus conserves the redox energy in a proton gradient. In Cutibacterium acnes (strain DSM 16379 / KPA171202) (Propionibacterium acnes), this protein is NADH-quinone oxidoreductase subunit N.